A 288-amino-acid polypeptide reads, in one-letter code: Structure-specific endonuclease subunit SLX1 (288 aa).

One can recognise a GIY-YIG domain in the interval 7–90; that stretch reads PFYGVYLLQS…QHPNMTRLIT (84 aa).

The protein belongs to the SLX1 family. In terms of assembly, forms a heterodimer with SLX4. Requires a divalent metal cation as cofactor.

Its subcellular location is the nucleus. Catalytic subunit of the SLX1-SLX4 structure-specific endonuclease that resolves DNA secondary structures generated during DNA repair and recombination. Has endonuclease activity towards branched DNA substrates, introducing single-strand cuts in duplex DNA close to junctions with ss-DNA. This Yarrowia lipolytica (strain CLIB 122 / E 150) (Yeast) protein is Structure-specific endonuclease subunit SLX1.